The primary structure comprises 315 residues: Ribosomal RNA small subunit methyltransferase H (315 aa).

Residues 42 to 44 (GGH), D59, F96, D108, and Q115 contribute to the S-adenosyl-L-methionine site.

The protein belongs to the methyltransferase superfamily. RsmH family.

Its subcellular location is the cytoplasm. It catalyses the reaction cytidine(1402) in 16S rRNA + S-adenosyl-L-methionine = N(4)-methylcytidine(1402) in 16S rRNA + S-adenosyl-L-homocysteine + H(+). Functionally, specifically methylates the N4 position of cytidine in position 1402 (C1402) of 16S rRNA. This Gemmatimonas aurantiaca (strain DSM 14586 / JCM 11422 / NBRC 100505 / T-27) protein is Ribosomal RNA small subunit methyltransferase H.